Consider the following 248-residue polypeptide: Pyridoxine 5'-phosphate synthase (248 aa).

Asn-10 serves as a coordination point for 3-amino-2-oxopropyl phosphate. 12-13 contacts 1-deoxy-D-xylulose 5-phosphate; the sequence is DH. Arg-21 lines the 3-amino-2-oxopropyl phosphate pocket. His-46 serves as the catalytic Proton acceptor. Positions 48 and 53 each coordinate 1-deoxy-D-xylulose 5-phosphate. The active-site Proton acceptor is the Glu-73. Thr-103 contacts 1-deoxy-D-xylulose 5-phosphate. His-194 functions as the Proton donor in the catalytic mechanism. 3-amino-2-oxopropyl phosphate-binding positions include Gly-195 and 216–217; that span reads GH.

This sequence belongs to the PNP synthase family. Homooctamer; tetramer of dimers.

Its subcellular location is the cytoplasm. It carries out the reaction 3-amino-2-oxopropyl phosphate + 1-deoxy-D-xylulose 5-phosphate = pyridoxine 5'-phosphate + phosphate + 2 H2O + H(+). It participates in cofactor biosynthesis; pyridoxine 5'-phosphate biosynthesis; pyridoxine 5'-phosphate from D-erythrose 4-phosphate: step 5/5. Catalyzes the complicated ring closure reaction between the two acyclic compounds 1-deoxy-D-xylulose-5-phosphate (DXP) and 3-amino-2-oxopropyl phosphate (1-amino-acetone-3-phosphate or AAP) to form pyridoxine 5'-phosphate (PNP) and inorganic phosphate. In Legionella pneumophila (strain Paris), this protein is Pyridoxine 5'-phosphate synthase.